The chain runs to 473 residues: Photosystem II CP43 reaction center protein (473 aa).

A propeptide spanning residues 1–14 is cleaved from the precursor; the sequence is MKTLYSLRRFYHVE. Thr15 is modified (N-acetylthreonine). Residue Thr15 is modified to Phosphothreonine. 5 helical membrane-spanning segments follow: residues 69–93, 134–155, 178–200, 255–275, and 291–312; these read LFEV…PHLA, LIGP…KDKN, KACY…RIIT, KPWA…LSYS, and WFNN…ASQA. Glu367 contacts [CaMn4O5] cluster. Residues 447–471 form a helical membrane-spanning segment; it reads RARAAAAGFEKGIERETEPVLFMKP.

Belongs to the PsbB/PsbC family. PsbC subfamily. As to quaternary structure, PSII is composed of 1 copy each of membrane proteins PsbA, PsbB, PsbC, PsbD, PsbE, PsbF, PsbH, PsbI, PsbJ, PsbK, PsbL, PsbM, PsbT, PsbX, PsbY, PsbZ, Psb30/Ycf12, at least 3 peripheral proteins of the oxygen-evolving complex and a large number of cofactors. It forms dimeric complexes. Binds multiple chlorophylls and provides some of the ligands for the Ca-4Mn-5O cluster of the oxygen-evolving complex. It may also provide a ligand for a Cl- that is required for oxygen evolution. PSII binds additional chlorophylls, carotenoids and specific lipids. serves as cofactor.

The protein resides in the plastid. It is found in the chloroplast thylakoid membrane. In terms of biological role, one of the components of the core complex of photosystem II (PSII). It binds chlorophyll and helps catalyze the primary light-induced photochemical processes of PSII. PSII is a light-driven water:plastoquinone oxidoreductase, using light energy to abstract electrons from H(2)O, generating O(2) and a proton gradient subsequently used for ATP formation. The protein is Photosystem II CP43 reaction center protein of Mesostigma viride (Green alga).